The sequence spans 1347 residues: Neurofascin (1347 aa).

The signal sequence occupies residues 1-24 (MARQPPPPWVHAAFLLCLLSLGGA). The Extracellular segment spans residues 25–1217 (IEIPMDPSIQ…NQADIATQGW (1193 aa)). Ig-like C2-type domains lie at 41–137 (PTIT…LQVS), 143–230 (PKEN…NPFT), 244–332 (PSFM…ISVR), 337–424 (PYWL…AFVS), 429–517 (PPRM…VRLE), and 521–603 (PTRI…QDLA). 4 cysteine pairs are disulfide-bonded: Cys-63–Cys-118, Cys-162–Cys-213, Cys-268–Cys-316, and Cys-358–Cys-408. Asn-305 carries N-linked (GlcNAc...) asparagine glycosylation. Asn-409 and Asn-446 each carry an N-linked (GlcNAc...) asparagine glycan. 2 cysteine pairs are disulfide-bonded: Cys-452/Cys-501 and Cys-543/Cys-592. At Tyr-481 the chain carries Phosphotyrosine. N-linked (GlcNAc...) asparagine glycosylation occurs at Asn-483. Ser-485 is subject to Phosphoserine. Fibronectin type-III domains lie at 630-725 (RPRD…TSGA), 730-823 (NPGD…SGED), 828-930 (APTE…TPEG), and 934-1030 (APRR…PNEA). The tract at residues 713–740 (PSLPSERYRTSGAPPESNPGDVKGEGTR) is disordered. Residues Asn-752 and Asn-778 are each glycosylated (N-linked (GlcNAc...) asparagine). The segment at 915–934 (GDGPRSETKEFTTPEGVPSA) is disordered. Positions 916–926 (DGPRSETKEFT) are enriched in basic and acidic residues. N-linked (GlcNAc...) asparagine glycosylation is found at Asn-973 and Asn-988. Disordered regions lie at residues 1011 to 1040 (TQVG…PTLP) and 1090 to 1111 (TTAA…TKIH). The span at 1024–1040 (PAPPNEATPTAAPPTLP) shows a compositional bias: pro residues. Low complexity predominate over residues 1090–1105 (TTAAATTTTESPPTTT). The Fibronectin type-III 5 domain occupies 1114 to 1206 (APDEQSIWNV…ITFMTSTAYT (93 aa)). The chain crosses the membrane as a helical span at residues 1218-1238 (FIGLMCAIALLVLILLIVCFI). The Cytoplasmic segment spans residues 1239 to 1347 (KRSRGGKYPV…SPVNAIYSLA (109 aa)). A disordered region spans residues 1248–1347 (VREKKDVPLG…SPVNAIYSLA (100 aa)). Over residues 1261 to 1272 (PKEEDGSFDYSD) the composition is skewed to acidic residues. Phosphoserine occurs at positions 1267, 1281, 1294, 1297, 1333, 1334, and 1338. Positions 1278–1291 (LQGSQTSLDGTIKQ) are enriched in polar residues.

Belongs to the immunoglobulin superfamily. L1/neurofascin/NgCAM family. As to quaternary structure, horseshoe-shaped homodimer. Probable constituent of a NFASC/NRCAM/ankyrin-G complex. Associates with the sodium channel beta-1 (SCN1B) and beta-3 (SCN3B) subunits. Interacts with GLDN/gliomedin. Interacts with MYOC.

Its subcellular location is the cell membrane. The protein resides in the cell junction. It localises to the paranodal septate junction. Its function is as follows. Cell adhesion, ankyrin-binding protein which may be involved in neurite extension, axonal guidance, synaptogenesis, myelination and neuron-glial cell interactions. This is Neurofascin (NFASC) from Homo sapiens (Human).